A 428-amino-acid polypeptide reads, in one-letter code: Putative POM121-like protein 1 (428 aa).

Disordered stretches follow at residues 1-23, 36-204, 254-293, 306-384, and 402-428; these read MDSL…RLSP, KESG…KFPL, DCRP…HKSQ, TEVP…PSTL, and GPQP…SCPK. Residues 44 to 62 are compositionally biased toward basic and acidic residues; the sequence is EQDKDPRVQENPGDQRRVP. Positions 106–117 are enriched in low complexity; sequence QTSQTSWTSSCT. Polar residues-rich tracts occupy residues 118 to 129, 144 to 155, 260 to 269, 326 to 347, and 403 to 415; these read NRNAISSSYSST, SHCQLTLSSSKT, PSHTLSSLAT, FSSS…QVTS, and PQPQ…RGQN. A compositionally biased stretch (low complexity) spans 416–428; that stretch reads QRSQTSRTSSCPK.

The protein belongs to the POM121 family.

The chain is Putative POM121-like protein 1 (POM121L1P) from Homo sapiens (Human).